The chain runs to 434 residues: Methylenetetrahydrofolate--tRNA-(uracil-5-)-methyltransferase TrmFO (434 aa).

10–15 (GAGLAG) is an FAD binding site.

The protein belongs to the MnmG family. TrmFO subfamily. FAD serves as cofactor.

Its subcellular location is the cytoplasm. It carries out the reaction uridine(54) in tRNA + (6R)-5,10-methylene-5,6,7,8-tetrahydrofolate + NADH + H(+) = 5-methyluridine(54) in tRNA + (6S)-5,6,7,8-tetrahydrofolate + NAD(+). The catalysed reaction is uridine(54) in tRNA + (6R)-5,10-methylene-5,6,7,8-tetrahydrofolate + NADPH + H(+) = 5-methyluridine(54) in tRNA + (6S)-5,6,7,8-tetrahydrofolate + NADP(+). In terms of biological role, catalyzes the folate-dependent formation of 5-methyl-uridine at position 54 (M-5-U54) in all tRNAs. This Bacillus cereus (strain G9842) protein is Methylenetetrahydrofolate--tRNA-(uracil-5-)-methyltransferase TrmFO.